The sequence spans 307 residues: Ribonuclease Z (307 aa).

Zn(2+) contacts are provided by histidine 63, histidine 65, aspartate 67, histidine 68, histidine 143, aspartate 213, and histidine 271. The Proton acceptor role is filled by aspartate 67.

It belongs to the RNase Z family. Homodimer. Zn(2+) serves as cofactor.

It catalyses the reaction Endonucleolytic cleavage of RNA, removing extra 3' nucleotides from tRNA precursor, generating 3' termini of tRNAs. A 3'-hydroxy group is left at the tRNA terminus and a 5'-phosphoryl group is left at the trailer molecule.. Zinc phosphodiesterase, which displays some tRNA 3'-processing endonuclease activity. Probably involved in tRNA maturation, by removing a 3'-trailer from precursor tRNA. The chain is Ribonuclease Z from Lactococcus lactis subsp. cremoris (strain SK11).